The following is a 309-amino-acid chain: Methionyl-tRNA formyltransferase (309 aa).

109 to 112 contributes to the (6S)-5,6,7,8-tetrahydrofolate binding site; it reads SLLP.

It belongs to the Fmt family.

It carries out the reaction L-methionyl-tRNA(fMet) + (6R)-10-formyltetrahydrofolate = N-formyl-L-methionyl-tRNA(fMet) + (6S)-5,6,7,8-tetrahydrofolate + H(+). In terms of biological role, attaches a formyl group to the free amino group of methionyl-tRNA(fMet). The formyl group appears to play a dual role in the initiator identity of N-formylmethionyl-tRNA by promoting its recognition by IF2 and preventing the misappropriation of this tRNA by the elongation apparatus. The sequence is that of Methionyl-tRNA formyltransferase from Clostridium novyi (strain NT).